Here is a 419-residue protein sequence, read N- to C-terminus: Tyrosine--tRNA ligase (419 aa).

Y34 is an L-tyrosine binding site. The 'HIGH' region motif lies at 39–48 (PTADSLHLGN). The L-tyrosine site is built by Y169 and Q173. The 'KMSKS' region signature appears at 229-233 (KFGKS). K232 lines the ATP pocket. Residues 353-419 (LTLVELLISA…GKKKNFVLTY (67 aa)) enclose the S4 RNA-binding domain.

The protein belongs to the class-I aminoacyl-tRNA synthetase family. TyrS type 1 subfamily. In terms of assembly, homodimer.

It is found in the cytoplasm. The catalysed reaction is tRNA(Tyr) + L-tyrosine + ATP = L-tyrosyl-tRNA(Tyr) + AMP + diphosphate + H(+). In terms of biological role, catalyzes the attachment of tyrosine to tRNA(Tyr) in a two-step reaction: tyrosine is first activated by ATP to form Tyr-AMP and then transferred to the acceptor end of tRNA(Tyr). The sequence is that of Tyrosine--tRNA ligase from Lactococcus lactis subsp. lactis (strain IL1403) (Streptococcus lactis).